The chain runs to 625 residues: Interleukin-1 receptor-associated kinase-like 2 (625 aa).

The 82-residue stretch at Leu-13 to Lys-94 folds into the Death domain. Residues Lys-111–Ser-181 form a disordered region. Residue Ser-144 is modified to Phosphoserine. Positions Leu-169–Ser-181 are enriched in polar residues. The region spanning Phe-210 to Leu-503 is the Protein kinase domain. ATP is bound by residues Ile-216–Val-224, Lys-237, and Lys-337–Asn-340. The tract at residues Ser-513–Ala-539 is disordered. Residues Ser-516–Pro-526 show a composition bias toward polar residues.

It belongs to the protein kinase superfamily. TKL Ser/Thr protein kinase family. Pelle subfamily. As to quaternary structure, interacts with MYD88. IL-1 stimulation leads to the formation of a signaling complex which dissociates from the IL-1 receptor following the binding of PELI1.

Functionally, binds to the IL-1 type I receptor following IL-1 engagement, triggering intracellular signaling cascades leading to transcriptional up-regulation and mRNA stabilization. The sequence is that of Interleukin-1 receptor-associated kinase-like 2 (IRAK2) from Pongo abelii (Sumatran orangutan).